Here is a 261-residue protein sequence, read N- to C-terminus: Acyl-[acyl-carrier-protein]--UDP-N-acetylglucosamine O-acyltransferase (261 aa).

This sequence belongs to the transferase hexapeptide repeat family. LpxA subfamily. As to quaternary structure, homotrimer.

The protein localises to the cytoplasm. It catalyses the reaction a (3R)-hydroxyacyl-[ACP] + UDP-N-acetyl-alpha-D-glucosamine = a UDP-3-O-[(3R)-3-hydroxyacyl]-N-acetyl-alpha-D-glucosamine + holo-[ACP]. It participates in glycolipid biosynthesis; lipid IV(A) biosynthesis; lipid IV(A) from (3R)-3-hydroxytetradecanoyl-[acyl-carrier-protein] and UDP-N-acetyl-alpha-D-glucosamine: step 1/6. Involved in the biosynthesis of lipid A, a phosphorylated glycolipid that anchors the lipopolysaccharide to the outer membrane of the cell. In Sulfurimonas denitrificans (strain ATCC 33889 / DSM 1251) (Thiomicrospira denitrificans (strain ATCC 33889 / DSM 1251)), this protein is Acyl-[acyl-carrier-protein]--UDP-N-acetylglucosamine O-acyltransferase.